The chain runs to 282 residues: Elongation factor Ts (282 aa).

The tract at residues 80–83 (TDFV) is involved in Mg(2+) ion dislocation from EF-Tu.

This sequence belongs to the EF-Ts family.

Its subcellular location is the cytoplasm. Functionally, associates with the EF-Tu.GDP complex and induces the exchange of GDP to GTP. It remains bound to the aminoacyl-tRNA.EF-Tu.GTP complex up to the GTP hydrolysis stage on the ribosome. In Aliivibrio salmonicida (strain LFI1238) (Vibrio salmonicida (strain LFI1238)), this protein is Elongation factor Ts.